Reading from the N-terminus, the 629-residue chain is Kelch-like protein 8 (629 aa).

The span at 1-10 shows a compositional bias: polar residues; that stretch reads MASESTNGKQ. The interval 1–40 is disordered; the sequence is MASESTNGKQARSHVTKGRRQYQHQHQQQQQQQQQVRSRS. A2 carries the N-acetylalanine modification. The segment covering 11-23 has biased composition (basic residues); the sequence is ARSHVTKGRRQYQ. Positions 24–35 are enriched in low complexity; the sequence is HQHQQQQQQQQQ. The BTB domain maps to 76–143; the sequence is CDVTLKVGSK…VYSSRLTLTV (68 aa). The BACK domain maps to 178 to 279; the sequence is CLAVRAFAES…LPVDFLMGVV (102 aa). Kelch repeat units lie at residues 328–375, 376–422, 424–469, 471–516, 517–563, and 565–610; these read VLFC…SVEG, KVYA…SLGG, IYAI…ALIN, VYAV…ELHG, CLYV…TVMG, and IFAV…VCDC.

As to quaternary structure, component of the BCR(KLHL8) E3 ubiquitin ligase complex, at least composed of CUL3, KLHL8 and RBX1. Interacts with RAPSN.

The protein operates within protein modification; protein ubiquitination. Functionally, substrate-specific adapter of a BCR (BTB-CUL3-RBX1) E3 ubiquitin ligase complex required for The BCR(KLHL8) ubiquitin ligase complex mediates ubiquitination and degradation of RAPSN. The sequence is that of Kelch-like protein 8 (Klhl8) from Mus musculus (Mouse).